Consider the following 422-residue polypeptide: MQLSPERCRPMSENREAWSANSEEMELLHGSNRLSSPEHVRRRVSGNSSEDGSPRICRQQSFGRDIGHAAAETYLITRLSFNLLGYLGVGYRWITRLLALACYAMLLMPGFLQVAYLYFFSSQVRRSIVYGGHPRNRLDLYIPPTSDGLKPVVVFVTGGAWIIGYKAWGSLLGLQLAERDIIVACLDYRNFPQGTISDMVSDAAQGISFVCNNISAFGGDPNRIYLMGQSAGAHISSCALFEQAIKESRGESISWSVSQIKAYFGLSGGYNLFNLVEHFHNRGLYRSIFLSIMEGEESFKQFSPEVRLKDLNVRKAAALLPHIILFHGSADYSIPPEASKTFTDALQAAEVKAELVMYKGKTHTDLFLQDPLRGGKDELFDHIVSMIHADDSDALRNDAVAPPRKRLVPEFLLKLAGRVSPF.

Residues 1-16 (MQLSPERCRPMSENRE) are compositionally biased toward basic and acidic residues. Residues 1-55 (MQLSPERCRPMSENREAWSANSEEMELLHGSNRLSSPEHVRRRVSGNSSEDGSPR) form a disordered region. Transmembrane regions (helical) follow at residues 97–117 (LLAL…VAYL) and 152–172 (VVVF…GSLL). Substrate is bound by residues 158 to 160 (GGA) and 229 to 231 (QSA). Residues Ser-230, Asp-331, and His-363 contribute to the active site.

This sequence belongs to the AB hydrolase superfamily. Isoprenylcysteine methylesterase family. In terms of tissue distribution, expressed at low levels in flowers and siliques.

The protein resides in the endoplasmic reticulum membrane. It is found in the golgi apparatus membrane. It catalyses the reaction [protein]-C-terminal S-[(2E,6E)-farnesyl]-L-cysteine methyl ester + H2O = [protein]-C-terminal S-[(2E,6E)-farnesyl]-L-cysteine + methanol + H(+). Functionally, catalyzes the demethylation of isoprenylcysteine methylesters. May act as a negative regulator of ABA signaling. This chain is Probable isoprenylcysteine alpha-carbonyl methylesterase ICMEL2, found in Arabidopsis thaliana (Mouse-ear cress).